A 254-amino-acid chain; its full sequence is Imidazole glycerol phosphate synthase subunit HisF (254 aa).

Residues aspartate 12 and aspartate 131 contribute to the active site.

Belongs to the HisA/HisF family. As to quaternary structure, heterodimer of HisH and HisF.

Its subcellular location is the cytoplasm. It catalyses the reaction 5-[(5-phospho-1-deoxy-D-ribulos-1-ylimino)methylamino]-1-(5-phospho-beta-D-ribosyl)imidazole-4-carboxamide + L-glutamine = D-erythro-1-(imidazol-4-yl)glycerol 3-phosphate + 5-amino-1-(5-phospho-beta-D-ribosyl)imidazole-4-carboxamide + L-glutamate + H(+). It functions in the pathway amino-acid biosynthesis; L-histidine biosynthesis; L-histidine from 5-phospho-alpha-D-ribose 1-diphosphate: step 5/9. Its function is as follows. IGPS catalyzes the conversion of PRFAR and glutamine to IGP, AICAR and glutamate. The HisF subunit catalyzes the cyclization activity that produces IGP and AICAR from PRFAR using the ammonia provided by the HisH subunit. The chain is Imidazole glycerol phosphate synthase subunit HisF from Corynebacterium aurimucosum (strain ATCC 700975 / DSM 44827 / CIP 107346 / CN-1) (Corynebacterium nigricans).